A 204-amino-acid polypeptide reads, in one-letter code: Large ribosomal subunit protein uL4 (204 aa).

Residues 53-73 (AFVSGGGKKPWRQKGRGGARA) form a disordered region.

This sequence belongs to the universal ribosomal protein uL4 family. Part of the 50S ribosomal subunit.

One of the primary rRNA binding proteins, this protein initially binds near the 5'-end of the 23S rRNA. It is important during the early stages of 50S assembly. It makes multiple contacts with different domains of the 23S rRNA in the assembled 50S subunit and ribosome. Functionally, forms part of the polypeptide exit tunnel. This Campylobacter concisus (strain 13826) protein is Large ribosomal subunit protein uL4.